Here is a 717-residue protein sequence, read N- to C-terminus: Amino-acid acetyltransferase, mitochondrial (717 aa).

The N-terminal 23 residues, 1-23, are a transit peptide targeting the mitochondrion; it reads MFIWTKAPARGLGKASKILPKRD. Positions 35 to 70 are disordered; it reads KQFHTATTSVRRSSSSAKERQRAERQQLTRLLKESP. Low complexity predominate over residues 39–50; sequence TATTSVRRSSSS. A compositionally biased stretch (basic and acidic residues) spans 51–70; the sequence is AKERQRAERQQLTRLLKESP. One can recognise an N-acetyltransferase domain in the interval 518-691; that stretch reads NPSIELADDP…GDVDDAKKRD (174 aa).

It belongs to the acetyltransferase family.

The protein localises to the mitochondrion. It catalyses the reaction L-glutamate + acetyl-CoA = N-acetyl-L-glutamate + CoA + H(+). It participates in amino-acid biosynthesis; L-arginine biosynthesis; N(2)-acetyl-L-ornithine from L-glutamate: step 1/4. In terms of biological role, N-acetylglutamate synthase involved in arginine biosynthesis. The protein is Amino-acid acetyltransferase, mitochondrial (arg2) of Pyrenophora tritici-repentis (strain Pt-1C-BFP) (Wheat tan spot fungus).